Consider the following 364-residue polypeptide: 3-isopropylmalate dehydrogenase (364 aa).

Position 78-91 (Gly78–Glu91) interacts with NAD(+). Substrate contacts are provided by Arg99, Arg109, Arg138, and Asp228. Positions 228, 252, and 256 each coordinate Mg(2+). Gly286–Asn298 is a binding site for NAD(+).

This sequence belongs to the isocitrate and isopropylmalate dehydrogenases family. LeuB type 1 subfamily. As to quaternary structure, homodimer. Mg(2+) serves as cofactor. The cofactor is Mn(2+).

It is found in the cytoplasm. It catalyses the reaction (2R,3S)-3-isopropylmalate + NAD(+) = 4-methyl-2-oxopentanoate + CO2 + NADH. It participates in amino-acid biosynthesis; L-leucine biosynthesis; L-leucine from 3-methyl-2-oxobutanoate: step 3/4. In terms of biological role, catalyzes the oxidation of 3-carboxy-2-hydroxy-4-methylpentanoate (3-isopropylmalate) to 3-carboxy-4-methyl-2-oxopentanoate. The product decarboxylates to 4-methyl-2 oxopentanoate. The sequence is that of 3-isopropylmalate dehydrogenase from Buchnera aphidicola subsp. Uroleucon obscurum.